The sequence spans 351 residues: Anthranilate phosphoribosyltransferase (351 aa).

5-phospho-alpha-D-ribose 1-diphosphate is bound by residues G92, 95 to 96 (GD), T100, 102 to 105 (NIST), 120 to 128 (KHGNRAASS), and S132. G92 serves as a coordination point for anthranilate. S104 is a Mg(2+) binding site. N123 lines the anthranilate pocket. Anthranilate is bound at residue R178. The Mg(2+) site is built by D236 and E237.

It belongs to the anthranilate phosphoribosyltransferase family. In terms of assembly, homodimer. The cofactor is Mg(2+).

The enzyme catalyses N-(5-phospho-beta-D-ribosyl)anthranilate + diphosphate = 5-phospho-alpha-D-ribose 1-diphosphate + anthranilate. The protein operates within amino-acid biosynthesis; L-tryptophan biosynthesis; L-tryptophan from chorismate: step 2/5. In terms of biological role, catalyzes the transfer of the phosphoribosyl group of 5-phosphorylribose-1-pyrophosphate (PRPP) to anthranilate to yield N-(5'-phosphoribosyl)-anthranilate (PRA). The chain is Anthranilate phosphoribosyltransferase from Deinococcus geothermalis (strain DSM 11300 / CIP 105573 / AG-3a).